The primary structure comprises 475 residues: Ribulose bisphosphate carboxylase large chain (475 aa).

The propeptide occupies 1 to 2; sequence MS. At Pro-3 the chain carries N-acetylproline. At Lys-14 the chain carries N6,N6,N6-trimethyllysine. Substrate is bound by residues Asn-123 and Thr-173. Lys-175 acts as the Proton acceptor in catalysis. Lys-177 contacts substrate. Positions 201, 203, and 204 each coordinate Mg(2+). Lys-201 is subject to N6-carboxylysine. His-294 functions as the Proton acceptor in the catalytic mechanism. Substrate contacts are provided by Arg-295, His-327, and Ser-379.

Belongs to the RuBisCO large chain family. Type I subfamily. Heterohexadecamer of 8 large chains and 8 small chains. Requires Mg(2+) as cofactor.

The protein localises to the plastid. It is found in the chloroplast. The catalysed reaction is 2 (2R)-3-phosphoglycerate + 2 H(+) = D-ribulose 1,5-bisphosphate + CO2 + H2O. The enzyme catalyses D-ribulose 1,5-bisphosphate + O2 = 2-phosphoglycolate + (2R)-3-phosphoglycerate + 2 H(+). RuBisCO catalyzes two reactions: the carboxylation of D-ribulose 1,5-bisphosphate, the primary event in carbon dioxide fixation, as well as the oxidative fragmentation of the pentose substrate in the photorespiration process. Both reactions occur simultaneously and in competition at the same active site. The polypeptide is Ribulose bisphosphate carboxylase large chain (Huperzia lucidula (Shining clubmoss)).